The primary structure comprises 422 residues: Lipoyl synthase, mitochondrial (422 aa).

A mitochondrion-targeting transit peptide spans 1–34 (MAASSTRLRCLYASSAPAWKKSPSQSIISLSRHY). Residues 37–48 (TSSTTPSLNPDE) show a composition bias toward polar residues. Positions 37-70 (TSSTTPSLNPDESSSSSSSTIPKRRKTTTFRDKL) are disordered. [4Fe-4S] cluster is bound by residues cysteine 146, cysteine 151, cysteine 157, cysteine 177, cysteine 181, cysteine 184, and serine 383. In terms of domain architecture, Radical SAM core spans 160–372 (GSDKSAATAT…RQRALEMGFL (213 aa)).

This sequence belongs to the radical SAM superfamily. Lipoyl synthase family. [4Fe-4S] cluster serves as cofactor.

Its subcellular location is the mitochondrion. The catalysed reaction is [[Fe-S] cluster scaffold protein carrying a second [4Fe-4S](2+) cluster] + N(6)-octanoyl-L-lysyl-[protein] + 2 oxidized [2Fe-2S]-[ferredoxin] + 2 S-adenosyl-L-methionine + 4 H(+) = [[Fe-S] cluster scaffold protein] + N(6)-[(R)-dihydrolipoyl]-L-lysyl-[protein] + 4 Fe(3+) + 2 hydrogen sulfide + 2 5'-deoxyadenosine + 2 L-methionine + 2 reduced [2Fe-2S]-[ferredoxin]. It functions in the pathway protein modification; protein lipoylation via endogenous pathway; protein N(6)-(lipoyl)lysine from octanoyl-[acyl-carrier-protein]: step 2/2. Functionally, catalyzes the radical-mediated insertion of two sulfur atoms into the C-6 and C-8 positions of the octanoyl moiety bound to the lipoyl domains of lipoate-dependent enzymes, thereby converting the octanoylated domains into lipoylated derivatives. This is Lipoyl synthase, mitochondrial from Talaromyces stipitatus (strain ATCC 10500 / CBS 375.48 / QM 6759 / NRRL 1006) (Penicillium stipitatum).